The sequence spans 447 residues: Acyl-CoA (8-3)-desaturase (447 aa).

N-acetylmethionine is present on Met-1. The Cytoplasmic portion of the chain corresponds to 1 to 124 (MAPDPVPTPG…FRELRATVER (124 aa)). The Cytochrome b5 heme-binding domain occupies 19–97 (TRYFTWEEVA…MNSLLIGELA (79 aa)). Residues 125-145 (MGLMKANHLFFLVYLLHILLL) form a helical membrane-spanning segment. At 146-160 (DVAAWLTLWIFGTSL) the chain is on the lumenal side. Residues 161 to 180 (VPFILCAVLLSTVQAQAGWL) form a helical membrane-spanning segment. Topologically, residues 181 to 268 (QHDFGHLSVF…HMPYNHQHKY (88 aa)) are cytoplasmic. The Histidine box-1 motif lies at 182-186 (HDFGH). Positions 219–223 (HFQHH) match the Histidine box-2 motif. Residues 269–289 (FFLIGPPALLPLYFQWYIFYF) traverse the membrane as a helical segment. Over 290 to 308 (VVQRKKWVDLAWMLSFYAR) the chain is Lumenal. Residues 309 to 329 (IFFTYMPLLGLKGFLGLFFIV) traverse the membrane as a helical segment. The Cytoplasmic segment spans residues 330–447 (RFLESNWFVW…QLWLDAYLHQ (118 aa)). The Histidine box-3 motif lies at 385-389 (QIEHH).

It belongs to the fatty acid desaturase type 1 family. As to expression, highly expressed in the adrenal gland, liver, brain, and testis, tissues where lipogenesis and steroidogenesis are active. Expressed in colonic mucosa.

The protein localises to the endoplasmic reticulum membrane. It localises to the mitochondrion. The catalysed reaction is (8Z,11Z,14Z)-eicosatrienoyl-CoA + 2 Fe(II)-[cytochrome b5] + O2 + 2 H(+) = (5Z,8Z,11Z,14Z)-eicosatetraenoyl-CoA + 2 Fe(III)-[cytochrome b5] + 2 H2O. The enzyme catalyses (8Z,11Z,14Z,17Z)-eicosatetraenoyl-CoA + 2 Fe(II)-[cytochrome b5] + O2 + 2 H(+) = (5Z,8Z,11Z,14Z,17Z)-eicosapentaenoyl-CoA + 2 Fe(III)-[cytochrome b5] + 2 H2O. It carries out the reaction (11E)-octadecenoyl-CoA + 2 Fe(II)-[cytochrome b5] + O2 + 2 H(+) = (5Z,11E)-octadecadienoyl-CoA + 2 Fe(III)-[cytochrome b5] + 2 H2O. It functions in the pathway lipid metabolism; polyunsaturated fatty acid biosynthesis. Its function is as follows. Acts as a front-end fatty acyl-coenzyme A (CoA) desaturase that introduces a cis double bond at carbon 5 located between a preexisting double bond and the carboxyl end of the fatty acyl chain. Involved in biosynthesis of highly unsaturated fatty acids (HUFA) from the essential polyunsaturated fatty acids (PUFA) linoleic acid (LA) (18:2n-6) and alpha-linolenic acid (ALA) (18:3n-3) precursors. Specifically, desaturates dihomo-gamma-linoleoate (DGLA) (20:3n-6) and eicosatetraenoate (ETA) (20:4n-3) to generate arachidonate (AA) (20:4n-6) and eicosapentaenoate (EPA) (20:5n-3), respectively. As a rate limiting enzyme for DGLA (20:3n-6) and AA (20:4n-6)-derived eicosanoid biosynthesis, controls the metabolism of inflammatory lipids like prostaglandin E2, critical for efficient acute inflammatory response and maintenance of epithelium homeostasis. Contributes to membrane phospholipid biosynthesis by providing AA (20:4n-6) as a major acyl chain esterified into phospholipids. In particular, regulates phosphatidylinositol-4,5-bisphosphate levels, modulating inflammatory cytokine production in T-cells. Also desaturates (11E)-octadecenoate (trans-vaccenoate)(18:1n-9), a metabolite in the biohydrogenation pathway of LA (18:2n-6). This is Acyl-CoA (8-3)-desaturase from Mus musculus (Mouse).